The chain runs to 190 residues: MEALHKKIREEGIVLSDQVLKVDAFLNHQIDPQLMKLIGDEFATLFKDSGITKIVTIEASGIAPAIMTGLNLGVPVIFARKHQSLTLTENLLSATVYSFTKQVESTVAISPRHLTSSDRVLIIDDFLANGKASQALISIIKQAGATVAGLGIVIEKSFQGGRAELDSQGYRVESLARVKSLAGGVVTFIE.

2 residues coordinate xanthine: Leu20 and Asn27. 5-phospho-alpha-D-ribose 1-diphosphate is bound at residue 128–132; it reads ANGKA. Lys156 serves as a coordination point for xanthine.

Belongs to the purine/pyrimidine phosphoribosyltransferase family. Xpt subfamily. Homodimer.

It is found in the cytoplasm. It catalyses the reaction XMP + diphosphate = xanthine + 5-phospho-alpha-D-ribose 1-diphosphate. Its pathway is purine metabolism; XMP biosynthesis via salvage pathway; XMP from xanthine: step 1/1. Functionally, converts the preformed base xanthine, a product of nucleic acid breakdown, to xanthosine 5'-monophosphate (XMP), so it can be reused for RNA or DNA synthesis. This is Xanthine phosphoribosyltransferase from Pseudomonas fluorescens (strain ATCC BAA-477 / NRRL B-23932 / Pf-5).